A 245-amino-acid polypeptide reads, in one-letter code: 1-(5-phosphoribosyl)-5-[(5-phosphoribosylamino)methylideneamino] imidazole-4-carboxamide isomerase (245 aa).

The Proton acceptor role is filled by D7. Catalysis depends on D129, which acts as the Proton donor.

It belongs to the HisA/HisF family.

It localises to the cytoplasm. The enzyme catalyses 1-(5-phospho-beta-D-ribosyl)-5-[(5-phospho-beta-D-ribosylamino)methylideneamino]imidazole-4-carboxamide = 5-[(5-phospho-1-deoxy-D-ribulos-1-ylimino)methylamino]-1-(5-phospho-beta-D-ribosyl)imidazole-4-carboxamide. The protein operates within amino-acid biosynthesis; L-histidine biosynthesis; L-histidine from 5-phospho-alpha-D-ribose 1-diphosphate: step 4/9. This chain is 1-(5-phosphoribosyl)-5-[(5-phosphoribosylamino)methylideneamino] imidazole-4-carboxamide isomerase, found in Shewanella sp. (strain MR-4).